A 362-amino-acid chain; its full sequence is Phospho-N-acetylmuramoyl-pentapeptide-transferase (362 aa).

Helical transmembrane passes span 27 to 47 (VMAAMTALLISFACGPAVIRW), 73 to 93 (TMGGALIIIAIAVTTLLWGDL), 97 to 117 (YVWVTLLVTLGFGAVGWVDDW), 132 to 152 (WKYLWTSLIALAAALFLGLTA), 160 to 180 (LIVPFFKAVSYPLGMLGFVAL), 200 to 220 (GLAIMPTVMVAGALAIFAYVA), 237 to 257 (AGELAVFCGALAGAGLGFLWF), 264 to 284 (VFMGDVGALALGAALGTVAVV), 289 to 309 (IVLFIMGGLFVAETLSVMVQV), and 339 to 359 (QVVVRFWIITIMLVLFGLSTL).

Belongs to the glycosyltransferase 4 family. MraY subfamily. Mg(2+) serves as cofactor.

The protein localises to the cell inner membrane. The enzyme catalyses UDP-N-acetyl-alpha-D-muramoyl-L-alanyl-gamma-D-glutamyl-meso-2,6-diaminopimeloyl-D-alanyl-D-alanine + di-trans,octa-cis-undecaprenyl phosphate = di-trans,octa-cis-undecaprenyl diphospho-N-acetyl-alpha-D-muramoyl-L-alanyl-D-glutamyl-meso-2,6-diaminopimeloyl-D-alanyl-D-alanine + UMP. It functions in the pathway cell wall biogenesis; peptidoglycan biosynthesis. Its function is as follows. Catalyzes the initial step of the lipid cycle reactions in the biosynthesis of the cell wall peptidoglycan: transfers peptidoglycan precursor phospho-MurNAc-pentapeptide from UDP-MurNAc-pentapeptide onto the lipid carrier undecaprenyl phosphate, yielding undecaprenyl-pyrophosphoryl-MurNAc-pentapeptide, known as lipid I. In Aromatoleum aromaticum (strain DSM 19018 / LMG 30748 / EbN1) (Azoarcus sp. (strain EbN1)), this protein is Phospho-N-acetylmuramoyl-pentapeptide-transferase.